The following is a 468-amino-acid chain: Nuclear receptor ROR-alpha A (468 aa).

The nuclear receptor DNA-binding region spans 15-90; that stretch reads IIPCKICGDK…VGMSRDAVKF (76 aa). NR C4-type zinc fingers lie at residues 18 to 38 and 54 to 73; these read CKIC…CEGC and CPRQ…CQHC. Disordered stretches follow at residues 101 to 129 and 142 to 163; these read LYAE…PLTP and HDDL…DSGV. Positions 217–455 constitute an NR LBD domain; the sequence is ELEHLAQNIS…AHFPPLYKEL (239 aa). Residues 444-455 form an AF-2 region; it reads VRAHFPPLYKEL.

Belongs to the nuclear hormone receptor family. NR1 subfamily. As to expression, expressed in the brain, in cerebellar-like structures, including Purkinje cells.

The protein localises to the nucleus. Nuclear receptor that binds DNA as a monomer to ROR response elements (RORE). Required for proper cerebellum development. The polypeptide is Nuclear receptor ROR-alpha A (roraa) (Danio rerio (Zebrafish)).